A 544-amino-acid chain; its full sequence is Dynein intermediate chain 1 (544 aa).

WD repeat units follow at residues 241 to 281, 289 to 330, 342 to 387, 402 to 441, 461 to 501, and 506 to 544; these read KARS…YPVS, GHLE…RPSE, SQCI…QPSN, VMTS…NQHE, THKA…EAPV, and PDGK…NLAN.

This sequence belongs to the dynein intermediate chain family.

Its subcellular location is the cytoplasm. In terms of biological role, has a role in meiotic nuclear divsion where it promotes the movement of 'horsetails'. This chain is Dynein intermediate chain 1 (dic1), found in Schizosaccharomyces pombe (strain 972 / ATCC 24843) (Fission yeast).